A 302-amino-acid chain; its full sequence is Ribonuclease HII (302 aa).

The region spanning 53-297 (EFEIGVDEVG…VQQAIEGTLA (245 aa)) is the RNase H type-2 domain. Residues D59, E60, and D163 each contribute to the a divalent metal cation site.

The protein belongs to the RNase HII family. Requires Mn(2+) as cofactor. Mg(2+) serves as cofactor.

It localises to the cytoplasm. It catalyses the reaction Endonucleolytic cleavage to 5'-phosphomonoester.. Its function is as follows. Endonuclease that specifically degrades the RNA of RNA-DNA hybrids. The sequence is that of Ribonuclease HII from Psychrobacter sp. (strain PRwf-1).